Here is a 240-residue protein sequence, read N- to C-terminus: Octanoyltransferase (240 aa).

Residues 49 to 233 (HQAEELVWLL…AFESVFGATR (185 aa)) enclose the BPL/LPL catalytic domain. Substrate contacts are provided by residues 87–94 (RGGQVTYH), 162–164 (AIG), and 175–177 (GIA). The active-site Acyl-thioester intermediate is the cysteine 193.

Belongs to the LipB family.

Its subcellular location is the cytoplasm. The enzyme catalyses octanoyl-[ACP] + L-lysyl-[protein] = N(6)-octanoyl-L-lysyl-[protein] + holo-[ACP] + H(+). The protein operates within protein modification; protein lipoylation via endogenous pathway; protein N(6)-(lipoyl)lysine from octanoyl-[acyl-carrier-protein]: step 1/2. In terms of biological role, catalyzes the transfer of endogenously produced octanoic acid from octanoyl-acyl-carrier-protein onto the lipoyl domains of lipoate-dependent enzymes. Lipoyl-ACP can also act as a substrate although octanoyl-ACP is likely to be the physiological substrate. In Bradyrhizobium sp. (strain ORS 278), this protein is Octanoyltransferase.